Here is a 3961-residue protein sequence, read N- to C-terminus: MSGILDRCTCTPNARVFVAEGQVYCTRCLSARSLLPLNLQVSELGVLGLFYRPEEPLRWTLPRAFPTVECSPAGACWLSAIFPIARMTSGNLNFQQRMVRVAAEIYRAGQLTPAVLKALQVYERGCRWYPIVGPVPGVAVFANSLHVSDKPFPGATHVLTNLPLPQRPKPEDFCPFECAMATVYDIGHDAVMYVAEGKISWAPRGGDEVKFEAVPGELKLIANRLRTSFPPHHAVDMSKFAFTAPGCGVSMRVERQHGCLPADTVPEGNCWWSLFDLLPLEVQDKEIRHANQFGYQTKHGVSGKYLQRRLQVNGLRAVTDSNGPIVVQYFSVKESWIRHLKLAGEPSYSGFEDLLRIRVEPNTSPLANTEGKIFRFGSHKWYGAGKRARKARSCATATVAGRALSVRETRQAKEHEVAGADKAEHLKHYSPPAEGNCGWHCISAIANRMVNSIFETTLPERVRPPDDWATDDDLANAIQILRLPAALDRNGACTSAKYVLKLEGEHWTVTVTPGMSPSLLPLECVQGCCEHKGGLGSPDAIEVSGFDPACLDWLAEVMHLPSSAIPAALAEMSGDSDRSASPVTTVWTVSQFFARHSGGNHPDQVRLGKIISLCQVIEDCCCSQNKTNRVTPEEVAAKIDLYLRGATNLEECLARLEKARPPRVIDTSFDWDVVLPGVEAATQTNKLPQVNQCRALVPVVTQKSLDNNSVPLTAFSLANYYYRAQGDEVRHRERLTAVLSKLEEVVREEYGLMPTEPGPRPTLPRGLDELKDQMEEDLLRLANAQATSDMMAWAVEQVDLKTWVKNYPRWTPPPPPPKVQPRKTKPVKSLPERKPVPAPRRKVGPDCGSPVSLGGDVPNSWEDLAVSSPLDLPTPPEPATLSSELVIVSSPQCIFRPATPLSEPAPIPAPRGTVSRPVTPLSEPIPVPAPRRKFQQVKRLSSAAAVPLHQNEPLDLSASSQTEYEASPSAPPQSGGVLGVEGHEAEETLSEISDMSGNIKPASVSSSSSLSSVEITRPKYSAQAIIDSGGPCSGHLQGVKETCLSVMREACDATKLDDPATQEWLSRMWDRVDMLTWRNTSVCQAIRTLDGRLKFLPKMILETPPPYPCEFVMMPHTPAPSVGAESDLTIGSVATEDVPRILEKIENVGEMANQEPSAFSEDKPVDDQLVNDPRISSRRPDESTAAPSAGTGGAGSFTDLPSSDGADADGGGPFRTAKRKAERLFDQLSRQVFDLVSHLPVFFSRLFHPGGGYSTGDWGFAAFTLLCLFLCYSYPAFGIAPLLGVFSGTSRRVRMGVFGCWLAFAVGLFKPVSDPVGAACEFDSPECRNILLSFELLKPWDPVRSLVVGPVGLGLAILGRLLGGARCIWHFLLRLGIVADCILAGAYVLSQGRCKKCWGSCIRTAPNEVAFNVFPFTRATRSSLIDLCDRFCAPKGMDPIFLATGWRGCWAGRSPIEQPSEKPIAFAQLDEKKITARTVVAQPYDPNQAVKCLRVLQAGGAMVAEAVPKVVKVSAVPFRAPFFPTGVKVDPDCRVVVDPDTFTAALRSGYSTTNLVLGVGDFAQLNGLKIRQISKPSGGGPHLMAALHVACSMALHMLTGIYVTAVGSCGTGTNDPWCANPFAVPGYGPGSLCTSRLCISQHGLTLPLTALVAGFGIQEIALVVLIFVSIGGMAHRLSCKADMLCILLAIASYVWVPLTWLLCVFPCWLRCFSLHPLTILWLVFFLISVNMPSGILAMVLLVSLWLLGRYTNVAGLVTPYDIHHYTSGPRGVAALATAPDGTYLAAVRRAALTGRTMLFTPSQLGSLLEGAFRTRKPSLNTVNVIGSSMGSGGVFTIDGKVKCVTAAHVLTGNSARVSGVGFNQMLDFDVKGDFAIADCPNWQGAAPKAQFCADGWTGRAYWLTSSGVEPGVIGKGFAFCFTACGDSGSPVITEAGELVGVHTGSNKQGGGIVTRPSGQFCNVAPIKLSELSEFFAGPKVPLGDVKVGSHIIKDISEVPSDLCALLAAKPELEGGLSTVQLLCVFFLLWRMMGHAWTPLVAVSFFILNEVLPAVLVRSVFSFGMFVLSWLTPWSAQILMIRLLTAALNRNRWSLAFFSLGAVTGFVADLAATQGHPLQAVMNLSTYAFLPRMMVVTSPVPVITCGVVHLLAIILYLFKYRGLHQILVGDGVFSAAFFLRYFAEGKLREGVSQSCGMNHESLTGALAMRLNDEDLDFLMKWTDFKCFVSASNMRNAAGQFIEAAYAKALRVELAQLVQVDKVRGVLAKLEAFADTVAPQLSPGDIVVALGHTPVGSIFDLKVGSTKHTLQAIETRVLAGSKMTVARVVDPTPTPPPAPVPIPLPPKVLENGPNAWGDEDRLNKKKRRRMEALGIYVMGGKKYQKFWDKNSGDVFYEEVHNNTDEWECLRVGDPADFDPEKGTLCGHVTIENKAYHVYISPSGKKFLVPVNPENGRVQWEAAKLSMEQALGMMNVDGELTAKELEKLKRIIDKLQGLTKEQCLNCLLAASGLTRCGRGGLVVTETAVKIVKFHNRTFTLGPVNLKVASEVELKDAVEHNQHPVARPIDGGVVLLRSAVPSLIDVLISGADASPKLLAHHGPGNTGIDGTLWDFESEATKEEVALSAQIIQACDIRRGDAPKIGLPYKLYPVRGNPERVKGVLQNTRFGDIPYKTPSDTGSPVHAAACLTPNATPVTDGRSVLATTMPPGFELYVPTIPASVLDYLDSRPDCPKQLTEHGCEDAALKDLSKYDLSTQGFVLPGVLRLVRKYLFAHVGKCPPVHRPSTYPAKNSMAGINGNRFPTKDIQSVPEIDVLCAQAVRENWQTVTPCTLKKQYCGKKKTRTILGTNNFIALAHRAALSGVTQGFMKKAFNSPIALGKNKFKELQTSVLGRCLEADLASCDRSTPAIVRWFAANLLYELACAEEHLPSYVLNCCHDLLVTQSGAVTKRGGLSSGDPITSVSNTIYSLVIYAQHMVLSYFKSGHPHGLLFLQDQLKFEDMLKVQPLIVYSDDLVLYAESPTMPNYHWWVEHLNLMLGFQTDPKKTAITDSPSFLGCRIINGRQLVPNRDRILAALAYHMKASNVSEYYASAAAILMDSCACLEYDPEWFEELVVGIAQCARKDGYSFPGTPFFMSMWEKLRSNYEGKKSRVCGYCGAPAPYATACGLDVCIYHTHFHQHCPVTIWCGHPAGSGSCSECKSPVGKGTSPLDEVLEQVPYKPPRTVIMHVEQGLTPLDPGRYQTRRGLVSVRRGIRGNEVELPDGDYASTALLPTCKEINMVAVASNVLRSRFIIGPPGAGKTYWLLQQVQDGDVIYTPTHQTMLDMIRALGTCRFNVPAGTTLQFPVPSRTGPWVRILAGGWCPGKNSFLDEAAYCNHLDVLRLLSKTTLTCLGDFKQLHPVGFDSHCYVFDIMPQTQLKTIWRFGQNICDAIQPDYRDKLMSMVNTTRVTYVEKPVRYGQVLTPYHRDREDDAITIDSSQGATFDVVTLHLPTKDSLNRQRALVAITRARHAIFVYDPHRQLQGLFDLPAKGTPVNLAVHRDGQLIVLDRNNKECTVAQALGNGDKFRATDKRVVDSLRAICADLEGSSSPLPKVAHNLGFYFSPDLTQFAKLPVELAPHWPVVTTQNNEKWPDRLVASLRPIHKYSRACIGAGYMVGPSVFLGTPGVVSYYLTKFVKGEAQLLPETVFSTGRIEVDCREYLDDREREVAASLPHAFIGDVKGTTVGGCHHVTSRYLPRVLPKESVAVVGVSSPGKAAKALCTLTDVYLPDLEAYLHPETQSKCWKMMLDFKEVRLMVWRDKTAYFQLEGRYFTWYQLASYASYIRVPVNSTVYLDPCMGPALCNRRVVGSTHWGADLAVTPYDYGAKIILSSAYHGEMPPGYKILACAEFSLDDPVRYKHTWGFESDTAYLYEFTGNGEDWEDYNDAFRARQEGKIYKATATSLKFHFPPGPVIEPTLGLN.

The C4-type; atypical zinc-finger motif lies at 8-28 (CTCTPNARVFVAEGQVYCTRC). The Peptidase C31 domain occupies 69–180 (ECSPAGACWL…EDFCPFECAM (112 aa)). The segment at 69 to 182 (ECSPAGACWL…FCPFECAMAT (114 aa)) is PCP1-alpha. Residues Cys-76 and His-146 each act as for Nsp1-alpha papain-like cysteine proteinase activity in the active site. The tract at residues 199 to 200 (IS) is important for host EIF2AK2 inhibition. Positions 263–382 (DTVPEGNCWW…IFRFGSHKWY (120 aa)) are PCP1-beta. One can recognise a Peptidase C32 domain in the interval 263–383 (DTVPEGNCWW…FRFGSHKWYG (121 aa)). Active-site for Nsp1-beta papain-like cysteine proteinase activity residues include Cys-270 and His-339. Residues 426–513 (LKHYSPPAEG…GEHWTVTVTP (88 aa)) form an OTU-like region. One can recognise a Peptidase C33 domain in the interval 428–535 (HYSPPAEGNC…QGCCEHKGGL (108 aa)). Residues Cys-437 and His-506 each act as for Nsp2 cysteine proteinase activity in the active site. Disordered regions lie at residues 809–862 (RWTP…NSWE), 898–979 (ATPL…GVLG), and 1153–1213 (NQEP…GGGP). The span at 810–819 (WTPPPPPPKV) shows a compositional bias: pro residues. The next 8 helical transmembrane spans lie at 1266 to 1286 (LCLF…LGVF), 1296 to 1316 (GVFG…SDPV), 1345 to 1365 (SLVV…LGGA), 1368 to 1388 (IWHF…GAYV), 1583 to 1603 (LMAA…GIYV), 1650 to 1670 (ALVA…FVSI), 1685 to 1705 (CILL…LCVF), and 1719 to 1739 (ILWL…LAMV). Positions 1266–1388 (LCLFLCYSYP…ADCILAGAYV (123 aa)) are HD1. An HD2 region spans residues 1583–1745 (LMAALHVACS…LAMVLLVSLW (163 aa)). The region spanning 1810-2013 (GAFRTRKPSL…ALLAAKPELE (204 aa)) is the Peptidase S32 domain. Catalysis depends on charge relay system; for 3C-like serine proteinase activity residues His-1848, Asp-1873, and Ser-1927. 5 consecutive transmembrane segments (helical) span residues 2012 to 2032 (LEGG…WRMM), 2060 to 2080 (FSFG…ILMI), 2092 to 2112 (WSLA…LAAT), 2137 to 2157 (SPVP…LYLF), and 2164 to 2184 (QILV…FAEG). The interval 2036–2157 (WTPLVAVSFF…HLLAIILYLF (122 aa)) is HD3. The segment at 2329–2358 (PTPTPPPAPVPIPLPPKVLENGPNAWGDED) is disordered. Residues 2330–2344 (TPTPPPAPVPIPLPP) are compositionally biased toward pro residues. The region spanning 2488 to 2651 (IIDKLQGLTK…LPYKLYPVRG (164 aa)) is the NiRAN domain. The RdRp catalytic domain occupies 2890-3024 (GRCLEADLAS…YAESPTMPNY (135 aa)). Residues 3145–3208 (GKKSRVCGYC…SPVGKGTSPL (64 aa)) enclose the AV ZBD domain. Zn(2+) is bound by residues Cys-3151, Cys-3154, Cys-3164, Cys-3169, His-3172, His-3174, His-3176, His-3178, Cys-3185, His-3187, Cys-3194, and Cys-3197. The 153-residue stretch at 3265-3417 (ASTALLPTCK…VFDIMPQTQL (153 aa)) folds into the (+)RNA virus helicase ATP-binding domain. An ATP-binding site is contributed by 3298–3305 (GKTYWLLQ). Residues 3418 to 3546 (KTIWRFGQNI…AVHRDGQLIV (129 aa)) enclose the (+)RNA virus helicase C-terminal domain. The region spanning 3585–3681 (EGSSSPLPKV…LTKFVKGEAQ (97 aa)) is the AV-Nsp11N/CoV-Nsp15M domain. The NendoU domain maps to 3683–3805 (LPETVFSTGR…MVWRDKTAYF (123 aa)). Residues His-3714, His-3729, and Lys-3758 contribute to the active site.

This sequence belongs to the arteriviridae polyprotein family. Nsp1-alpha papain-like: Interacts with host RNF31. In terms of assembly, interacts with host EIF2AK2; this interaction occurs in host stress granules and leads to EIF2AK2 inhibition. Interacts with host G3BP1; this interaction probably plays a role in Nsp1-beta-mediated inhibition of host EIF2AK2. As to quaternary structure, interacts with host DDX18; this interaction redistributes host DDX18 to the cytoplasm. Interacts with host IFITM1. In terms of assembly, interacts with host DDX5. As to quaternary structure, interacts with host OTULIN. Interacts with host LGALS3. Specific enzymatic cleavages in vivo by its own proteases yield mature proteins. Nsp1 is autocleaved into two subunits, Nsp1-alpha and Nsp1-beta. There are two alternative pathways for processing. Either nsp4-5 is cleaved, which represents the major pathway or the nsp5-6 and nsp6-7 are processed, which represents the minor pathway. The major pathway occurs when nsp2 acts as a cofactor for nsp4.

The protein resides in the host nucleus. It localises to the host cytoplasm. It is found in the host membrane. Its subcellular location is the host endoplasmic reticulum. The protein localises to the host perinuclear region. It catalyses the reaction RNA(n) + a ribonucleoside 5'-triphosphate = RNA(n+1) + diphosphate. The catalysed reaction is ATP + H2O = ADP + phosphate + H(+). It carries out the reaction Thiol-dependent hydrolysis of ester, thioester, amide, peptide and isopeptide bonds formed by the C-terminal Gly of ubiquitin (a 76-residue protein attached to proteins as an intracellular targeting signal).. The enzyme catalyses uridylyl-uridylyl-ribonucleotide-RNA = a 3'-end uridylyl-2',3'-cyclophospho-uridine-RNA + a 5'-end dephospho-ribonucleoside-RNA. Its function is as follows. Contains the activities necessary for the transcription of negative stranded RNA, leader RNA, subgenomic mRNAs and progeny virion RNA as well as proteinases responsible for the cleavage of the polyprotein into functional products. Inhibits host IFN-beta production. Plays a role in the degradation of the host transcriptional activator CREBBP protein. The degradation of host CREBBP which is a key component of the IFN enhanceosome is likely responsible for the inhibition of interferon mediated by Nsp1-alpha. Also participates in the inhibition of host NF-kappa-B activation by counteracting LUBAC-dependent induction of NF-kappa-B. Reduces host NEMO ubiquitination by blocking the interaction between the two LUBAC complex components RNF31 and SHARPIN. In terms of biological role, plays a role in blocking host mRNA nuclear export to the cytoplasm and subversion of host protein synthesis. Additionally, inhibits the interferon-activated JAK/STAT signal transduction by mediating the ubiquitination and subsequent proteasomal degradation of host KPNA1. Repurposes the host antiviral stress granules into a proviral platform to counteract the EIF2AK2/PKR restriction, thereby regulating the host inflammatory response. Functionally, multifunctional protein that acts as a viral protease and as a viral antagonist of host immune response. Cleaves the nsp2/nsp3 site in the viral polyprotein. Displays deubiquitinating activity that cleaves both ubiquitinated and ISGylated products and therefore inhibits ubiquitin and ISG15-dependent host innate immunity. Also deubiquinates host NFKBIA, thereby interfering with NFKBIA degradation and impairing subsequent NF-kappa-B activation. Its function is as follows. Plays a role in the inhibition of the immune response by interacting with host IFITM1. This interaction leads to the proteasomal degradation of the IFN-induced antiviral protein IFITM1. Cleaves the majority of cleavage sites present in the C-terminus of the polyprotein. Triggers host apoptosis through caspase-3, -8, and -9 activations. Subverts host innate immune responses through its protease activity. Targets the NF-kappa-B essential modulator NEMO and mediates its cleavage. Blocks host interferon beta induction and downstream signaling by cleaving mitochondrial MAVS, dislodging it from the mitochondria. Impairs host defense by cleaving host mRNA-decapping enzyme DCP1A to attenuate its antiviral activity. In terms of biological role, plays a role in the initial induction of autophagosomes from host endoplasmic reticulum. Functionally, plays a role in the inhibition of host STAT3 signaling pathway by inducing the degradation of STAT3. Its function is as follows. Responsible for replication and transcription of the viral RNA genome. Displays RNA and DNA duplex-unwinding activities with 5' to 3' polarity. In terms of biological role, plays a role in viral transcription/replication and prevents the simultaneous activation of host cell dsRNA sensors, such as MDA5/IFIH1, OAS, PKR and NLRP3 inflammasome. Acts by degrading the 5'-polyuridines generated during replication of the poly(A) region of viral genomic and subgenomic RNAs. Catalyzes a two-step reaction in which a 2'3'-cyclic phosphate (2'3'-cP) is first generated by 2'-O transesterification, which is then hydrolyzed to a 3'-phosphate (3'-P). If not degraded, poly(U) RNA would hybridize with poly(A) RNA tails and activate host dsRNA sensors. Also plays a role in the inhibition of host type I interferon production by recruiting host OTULIN to promote removal of linear ubiquitination targeting host NEMO. This chain is Replicase polyprotein 1ab (rep), found in Porcine reproductive and respiratory syndrome virus (strain 16244B) (PRRSV).